Consider the following 151-residue polypeptide: Transmembrane protein 239 (151 aa).

3 helical membrane-spanning segments follow: residues 61–81, 85–105, and 116–138; these read LWGL…HALF, SYLL…LLPA, and ALLF…GLLT.

It localises to the membrane. This is Transmembrane protein 239 (Tmem239) from Mus musculus (Mouse).